Here is a 265-residue protein sequence, read N- to C-terminus: 3-methyl-2-oxobutanoate hydroxymethyltransferase (265 aa).

Mg(2+) contacts are provided by Asp45 and Asp84. 3-methyl-2-oxobutanoate is bound by residues 45-46, Asp84, and Lys112; that span reads DS. Glu114 is a binding site for Mg(2+). The active-site Proton acceptor is the Glu181.

The protein belongs to the PanB family. In terms of assembly, homodecamer; pentamer of dimers. It depends on Mg(2+) as a cofactor.

The protein localises to the cytoplasm. The catalysed reaction is 3-methyl-2-oxobutanoate + (6R)-5,10-methylene-5,6,7,8-tetrahydrofolate + H2O = 2-dehydropantoate + (6S)-5,6,7,8-tetrahydrofolate. Its pathway is cofactor biosynthesis; (R)-pantothenate biosynthesis; (R)-pantoate from 3-methyl-2-oxobutanoate: step 1/2. In terms of biological role, catalyzes the reversible reaction in which hydroxymethyl group from 5,10-methylenetetrahydrofolate is transferred onto alpha-ketoisovalerate to form ketopantoate. The chain is 3-methyl-2-oxobutanoate hydroxymethyltransferase from Pseudoalteromonas atlantica (strain T6c / ATCC BAA-1087).